Here is a 710-residue protein sequence, read N- to C-terminus: Integrator complex subunit 10 (710 aa).

Phosphoserine occurs at positions 231, 381, and 382. Lys464 is covalently cross-linked (Glycyl lysine isopeptide (Lys-Gly) (interchain with G-Cter in SUMO2)).

This sequence belongs to the Integrator subunit 10 family. Component of the Integrator complex, composed of core subunits INTS1, INTS2, INTS3, INTS4, INTS5, INTS6, INTS7, INTS8, INTS9/RC74, INTS10, INTS11/CPSF3L, INTS12, INTS13, INTS14 and INTS15. The core complex associates with protein phosphatase 2A subunits PPP2CA and PPP2R1A, to form the Integrator-PP2A (INTAC) complex. INTS10 is part of the tail subcomplex, composed of INTS10, INTS13, INTS14 and INTS15.

The protein localises to the nucleus. In terms of biological role, component of the integrator complex, a multiprotein complex that terminates RNA polymerase II (Pol II) transcription in the promoter-proximal region of genes. The integrator complex provides a quality checkpoint during transcription elongation by driving premature transcription termination of transcripts that are unfavorably configured for transcriptional elongation: the complex terminates transcription by (1) catalyzing dephosphorylation of the C-terminal domain (CTD) of Pol II subunit POLR2A/RPB1 and SUPT5H/SPT5, (2) degrading the exiting nascent RNA transcript via endonuclease activity and (3) promoting the release of Pol II from bound DNA. The integrator complex is also involved in terminating the synthesis of non-coding Pol II transcripts, such as enhancer RNAs (eRNAs), small nuclear RNAs (snRNAs), telomerase RNAs and long non-coding RNAs (lncRNAs). Within the integrator complex, INTS10 is part of the integrator tail module that acts as a platform for the recruitment of transcription factors at promoters. May be not involved in the recruitment of cytoplasmic dynein to the nuclear envelope, probably as component of the integrator complex. The protein is Integrator complex subunit 10 of Homo sapiens (Human).